The chain runs to 87 residues: Kappa-6-bungarotoxin (87 aa).

The N-terminal stretch at 1-21 (MKTLLLSLVVVTIVCLDLGYT) is a signal peptide. Intrachain disulfides connect C24-C42, C35-C63, C48-C52, C67-C79, and C80-C85.

It belongs to the three-finger toxin family. Long-chain subfamily. Kappa-neurotoxin sub-subfamily. In terms of assembly, homo- and heterodimer; non-covalently linked. In terms of tissue distribution, expressed by the venom gland.

The protein localises to the secreted. Postsynaptic neurotoxin that binds and inhibits neuronal nicotinic acetylcholine receptors (nAChR) with high affinity (IC(50)&lt;100 nM). Is a selective, and slowly reversible antagonist of alpha-3/CHRNA3-containing and some alpha-4/CHRNA4-containing AChRs. This is Kappa-6-bungarotoxin from Bungarus multicinctus (Many-banded krait).